A 354-amino-acid polypeptide reads, in one-letter code: MEVNKASLTYDVPEDREYATKRILSLKRPSKIMVIGDVDTGKTTLIVYLANELISRGFKVAIVDADVGQKGILPPATISLALADMKFSSLSELKPLIHYFVGSITPSQFFGEMIVGTMRLSEIGKKFADYVLIDTTGMIYGSGVELKRLKIEAVKPDLILALEKKEELNPIVSGFEDKTIKLKVSENARSYSRSERRQIRQEKWRKYFENAKIVSFSLENVVVTGTSLFQGSDIREEEKSLLERLFKWVILHGRRIGDKYFVVKADVAEVPRVVDKNVVRYFDFEKLSNLLVGLLNEEGLCLGVGIIKGINFGEKRIDILTPVSEIENVREIRFGRIRVREDGEELGILDREAL.

Residue 36 to 43 (GDVDTGKT) participates in ATP binding.

A divalent metal cation serves as cofactor.

It carries out the reaction a 5'-end dephospho-2'-deoxyribonucleoside-DNA + ATP = a 5'-end 5'-phospho-2'-deoxyribonucleoside-DNA + ADP + H(+). The enzyme catalyses a 5'-end dephospho-ribonucleoside-RNA + ATP = a 5'-end 5'-phospho-ribonucleoside-RNA + ADP + H(+). In terms of biological role, polynucleotide kinase that can phosphorylate the 5'-hydroxyl groups of both single-stranded RNA (ssRNA) and single-stranded DNA (ssDNA). Exhibits a strong preference for ssRNA. This chain is Polyribonucleotide 5'-hydroxyl-kinase PF0112, found in Pyrococcus furiosus (strain ATCC 43587 / DSM 3638 / JCM 8422 / Vc1).